A 332-amino-acid chain; its full sequence is Biotin synthase (332 aa).

The Radical SAM core domain occupies 53 to 282; the sequence is HFGKKVKLNM…TKEIRISGGR (230 aa). [4Fe-4S] cluster-binding residues include cysteine 71, cysteine 75, and cysteine 78. [2Fe-2S] cluster is bound by residues cysteine 115, cysteine 147, cysteine 207, and arginine 277.

This sequence belongs to the radical SAM superfamily. Biotin synthase family. As to quaternary structure, homodimer. [4Fe-4S] cluster serves as cofactor. The cofactor is [2Fe-2S] cluster.

It catalyses the reaction (4R,5S)-dethiobiotin + (sulfur carrier)-SH + 2 reduced [2Fe-2S]-[ferredoxin] + 2 S-adenosyl-L-methionine = (sulfur carrier)-H + biotin + 2 5'-deoxyadenosine + 2 L-methionine + 2 oxidized [2Fe-2S]-[ferredoxin]. It participates in cofactor biosynthesis; biotin biosynthesis; biotin from 7,8-diaminononanoate: step 2/2. Catalyzes the conversion of dethiobiotin (DTB) to biotin by the insertion of a sulfur atom into dethiobiotin via a radical-based mechanism. The chain is Biotin synthase from Bacillus cereus (strain AH187).